The chain runs to 147 residues: MSFRFGQHLIKPSVVFLKTELSFALVNRKPVVPGHVLVCPLRPVERFHDLRPDEVADLFQTTQRVGTVVEKHFHGTSLTFSMQDGPEAGQTVKHVHVHVLPRKAGDFHRNDSIYEELQKHDKEDFPASWRSEEEMAAEAAALRVYFQ.

The region spanning 2–109 is the HIT domain; it reads SFRFGQHLIK…LPRKAGDFHR (108 aa). Substrate contacts are provided by residues His8, Asn27, Gln83, and 89–92; that span reads GQTV. The Histidine triad motif signature appears at 94–98; the sequence is HVHVH. The active-site Tele-AMP-histidine intermediate is His96. A substrate-binding site is contributed by His98. Tyr114 is modified (phosphotyrosine; by SRC). Residue Tyr145 is modified to Phosphotyrosine.

In terms of assembly, homodimer. Interacts with UBE2I. Interacts with MDM2. Interacts with CTNNB1. Identified in a complex with CTNNB1 and LEF1. Phosphorylation at Tyr-114 by SRC is required for induction of apoptosis. As to expression, low levels expressed in all tissues tested. Phospho-FHIT observed in liver and kidney, but not in brain and lung. Phospho-FHIT undetected in all tested human tumor cell lines.

Its subcellular location is the cytoplasm. It is found in the mitochondrion. It localises to the nucleus. The catalysed reaction is P(1),P(3)-bis(5'-adenosyl) triphosphate + H2O = AMP + ADP + 2 H(+). It catalyses the reaction adenosine 5'-phosphosulfate + H2O = sulfate + AMP + 2 H(+). It carries out the reaction adenosine 5'-phosphosulfate + NH4(+) = adenosine 5'-phosphoramidate + sulfate + 2 H(+). The enzyme catalyses adenosine 5'-phosphoramidate + H2O = AMP + NH4(+). In terms of biological role, possesses dinucleoside triphosphate hydrolase activity. Cleaves P(1)-P(3)-bis(5'-adenosyl) triphosphate (Ap3A) to yield AMP and ADP. Can also hydrolyze P(1)-P(4)-bis(5'-adenosyl) tetraphosphate (Ap4A), but has extremely low activity with ATP. Exhibits adenylylsulfatase activity, hydrolyzing adenosine 5'-phosphosulfate to yield AMP and sulfate. Exhibits adenosine 5'-monophosphoramidase activity, hydrolyzing purine nucleotide phosphoramidates with a single phosphate group such as adenosine 5'monophosphoramidate (AMP-NH2) to yield AMP and NH2. Exhibits adenylylsulfate-ammonia adenylyltransferase, catalyzing the ammonolysis of adenosine 5'-phosphosulfate resulting in the formation of adenosine 5'-phosphoramidate. Also catalyzes the ammonolysis of adenosine 5-phosphorofluoridate and diadenosine triphosphate. Modulates transcriptional activation by CTNNB1 and thereby contributes to regulate the expression of genes essential for cell proliferation and survival, such as CCND1 and BIRC5. Plays a role in the induction of apoptosis via SRC and AKT1 signaling pathways. Inhibits MDM2-mediated proteasomal degradation of p53/TP53 and thereby plays a role in p53/TP53-mediated apoptosis. Induction of apoptosis depends on the ability of FHIT to bind P(1)-P(3)-bis(5'-adenosyl) triphosphate or related compounds, but does not require its catalytic activity, it may in part come from the mitochondrial form, which sensitizes the low-affinity Ca(2+) transporters, enhancing mitochondrial calcium uptake. Functions as a tumor suppressor. This is Bis(5'-adenosyl)-triphosphatase (FHIT) from Homo sapiens (Human).